Reading from the N-terminus, the 312-residue chain is RNA-binding protein Raly (312 aa).

The residue at position 2 (serine 2) is an N-acetylserine. Lysine 4 participates in a covalent cross-link: Glycyl lysine isopeptide (Lys-Gly) (interchain with G-Cter in SUMO2). Residues 21-92 (SRVFIGNLNT…QTLDINMAGE (72 aa)) form the RRM domain. Position 44 is an N6-acetyllysine (lysine 44). Glycyl lysine isopeptide (Lys-Gly) (interchain with G-Cter in SUMO2) cross-links involve residues lysine 94 and lysine 99. At serine 135 the chain carries Phosphoserine. A Glycyl lysine isopeptide (Lys-Gly) (interchain with G-Cter in SUMO2) cross-link involves residue lysine 159. The residue at position 165 (lysine 165) is an N6-acetyllysine; alternate. Lysine 165 participates in a covalent cross-link: Glycyl lysine isopeptide (Lys-Gly) (interchain with G-Cter in SUMO2); alternate. Glycyl lysine isopeptide (Lys-Gly) (interchain with G-Cter in SUMO2) cross-links involve residues lysine 179 and lysine 191. Residues 184-216 (SSELQTIKTELTQIKSNIDALLGRLEQIAEEQK) are a coiled coil. The span at 214 to 226 (EQKANPDGKKKGD) shows a compositional bias: basic and acidic residues. The interval 214-312 (EQKANPDGKK…DTDAEDGALQ (99 aa)) is disordered. Residues 228 to 253 (SSGGGGGSSGGGGSSNVGGGSSGGSG) show a composition bias toward gly residues. Residue threonine 268 is modified to Phosphothreonine. Serine 270 is subject to Phosphoserine. 2 positions are modified to phosphothreonine: threonine 274 and threonine 292. Residues 293-303 (HSEEELEHSQD) show a composition bias toward basic and acidic residues. 2 positions are modified to phosphoserine: serine 294 and serine 301. Threonine 304 carries the post-translational modification Phosphothreonine.

This sequence belongs to the RRM HNRPC family. RALY subfamily. As to quaternary structure, identified in the spliceosome C complex. Interacts (through its RNA-binding domain) with FUS (through its RNA-binding domain); both are components of the same RNPs. In terms of tissue distribution, widely expressed. Expressed in brain, testis, lung, spleen and kidney. Weakly expressed in liver.

It localises to the nucleus. Its function is as follows. RNA-binding protein that acts as a transcriptional cofactor for cholesterol biosynthetic genes in the liver. Binds the lipid-responsive non-coding RNA LeXis and is required for LeXis-mediated effect on cholesterogenesis. May be a heterogeneous nuclear ribonucleoprotein (hnRNP). This chain is RNA-binding protein Raly (Raly), found in Mus musculus (Mouse).